The chain runs to 906 residues: Protein translocase subunit SecA (906 aa).

Residues Q90, 108 to 112, and D503 each bind ATP; that span reads GEGKT. The segment at 845-882 is disordered; sequence TAAEAPASVPQPQAAVAPQPAPELVGADNGESQPQAWG. Low complexity predominate over residues 846–862; that stretch reads AAEAPASVPQPQAAVAP. Positions 890, 892, 901, and 902 each coordinate Zn(2+).

The protein belongs to the SecA family. As to quaternary structure, monomer and homodimer. Part of the essential Sec protein translocation apparatus which comprises SecA, SecYEG and auxiliary proteins SecDF-YajC and YidC. Requires Zn(2+) as cofactor.

It localises to the cell inner membrane. It is found in the cytoplasm. It carries out the reaction ATP + H2O + cellular proteinSide 1 = ADP + phosphate + cellular proteinSide 2.. In terms of biological role, part of the Sec protein translocase complex. Interacts with the SecYEG preprotein conducting channel. Has a central role in coupling the hydrolysis of ATP to the transfer of proteins into and across the cell membrane, serving both as a receptor for the preprotein-SecB complex and as an ATP-driven molecular motor driving the stepwise translocation of polypeptide chains across the membrane. The sequence is that of Protein translocase subunit SecA from Cereibacter sphaeroides (strain ATCC 17025 / ATH 2.4.3) (Rhodobacter sphaeroides).